Here is a 332-residue protein sequence, read N- to C-terminus: UDP-N-acetylenolpyruvoylglucosamine reductase (332 aa).

An FAD-binding PCMH-type domain is found at 15-184; it reads IDVSAACFLE…TYVSFRLSKR (170 aa). The active site involves arginine 160. Catalysis depends on serine 232, which acts as the Proton donor. Glutamate 328 is an active-site residue.

It belongs to the MurB family. Requires FAD as cofactor.

The protein localises to the cytoplasm. It catalyses the reaction UDP-N-acetyl-alpha-D-muramate + NADP(+) = UDP-N-acetyl-3-O-(1-carboxyvinyl)-alpha-D-glucosamine + NADPH + H(+). The protein operates within cell wall biogenesis; peptidoglycan biosynthesis. In terms of biological role, cell wall formation. The chain is UDP-N-acetylenolpyruvoylglucosamine reductase from Bacteroides fragilis (strain YCH46).